The primary structure comprises 284 residues: 4-diphosphocytidyl-2-C-methyl-D-erythritol kinase (284 aa).

Lys-14 is a catalytic residue. Residue 98–108 participates in ATP binding; sequence PMGGGLGGGSS. Asp-140 is a catalytic residue.

The protein belongs to the GHMP kinase family. IspE subfamily.

The catalysed reaction is 4-CDP-2-C-methyl-D-erythritol + ATP = 4-CDP-2-C-methyl-D-erythritol 2-phosphate + ADP + H(+). Its pathway is isoprenoid biosynthesis; isopentenyl diphosphate biosynthesis via DXP pathway; isopentenyl diphosphate from 1-deoxy-D-xylulose 5-phosphate: step 3/6. Catalyzes the phosphorylation of the position 2 hydroxy group of 4-diphosphocytidyl-2C-methyl-D-erythritol. In Shewanella sp. (strain W3-18-1), this protein is 4-diphosphocytidyl-2-C-methyl-D-erythritol kinase.